Here is a 433-residue protein sequence, read N- to C-terminus: Agnestins efflux protein AgnL12 (433 aa).

Polar residues-rich tracts occupy residues 1–10 (MSRSTSTELQ) and 25–40 (SIAS…PPST). Positions 1 to 40 (MSRSTSTELQQELPASKEVPPDPTSIASSETASGSKPPST) are disordered. Helical transmembrane passes span 47-67 (ILVL…TNAF), 87-107 (ISWI…ISGY), 116-136 (LLIC…SLST), 141-161 (IFLT…LPAM), 174-194 (LAMG…PIAL), 205-225 (WTVR…CLAI), 248-268 (VMIF…SPFF), 285-305 (FYMV…PGLI), 309-329 (VGNY…ACCW), 335-355 (VGGI…VISL), 370-390 (GVAM…GTPI), and 401-421 (LGLS…ILLA).

It belongs to the major facilitator superfamily. Monocarboxylate porter (TC 2.A.1.13) family.

Its subcellular location is the cell membrane. Its function is as follows. Efflux pump that may be involved in the secretion of agnestins, dihydroxy-xanthone metabolites. The sequence is that of Agnestins efflux protein AgnL12 from Paecilomyces divaricatus (Penicillium divaricatum).